Reading from the N-terminus, the 856-residue chain is Mechanosensitive ion channel protein 6 (856 aa).

2 disordered regions span residues 45-86 and 116-226; these read GEGN…DPPT and RGLT…PFAA. Basic and acidic residues-rich tracts occupy residues 70 to 85 and 129 to 140; these read QQKD…EDPP and TKRDPVGRRDSR. Polar residues predominate over residues 155-168; the sequence is SGNNAPIQRSSSTL. S211 is modified (phosphoserine). A compositionally biased stretch (acidic residues) spans 217–226; sequence EEEEDDPFAA. The next 4 helical transmembrane spans lie at 242-262, 283-303, 323-343, and 360-380; these read IVLE…TLAI, LVLI…VFFI, AVQN…LFDE, and IFVC…LVKV. Position 462 is a phosphoserine (S462). Helical transmembrane passes span 615–635 and 651–671; these read MVNI…LGIT and AFIF…LFVI.

It belongs to the MscS (TC 1.A.23) family.

The protein localises to the membrane. Mechanosensitive channel that opens in response to stretch forces in the membrane lipid bilayer. The polypeptide is Mechanosensitive ion channel protein 6 (MSL6) (Arabidopsis thaliana (Mouse-ear cress)).